A 459-amino-acid polypeptide reads, in one-letter code: XK-related protein 3 (459 aa).

The next 10 helical transmembrane spans lie at 35-55 (FSIIFSTVLYCGEVAFGLYMF), 68-88 (SFTISFIIVGAILDQIILMFF), 97-117 (AALLFWHILLLGPIVRCLHTI), 169-189 (IQAFLGSVPQLILQMYISLTI), 199-219 (LMTFSLLSVTYGAIRCNILAI), 238-258 (VVMWRFLEVISRVVTLAFFIA), 264-284 (SLPVLLIIYFVSLLAPWLEFW), 300-320 (MVGTVLMLFLITLLYAAINFS), 345-365 (ILHYSFQFLENVIMILVFRFF), and 377-397 (LIAVQLIISYLLATGFMLLFY).

It belongs to the XK family. In terms of tissue distribution, expressed predominantly, if not exclusively, in testis.

It localises to the cell membrane. This is XK-related protein 3 (XKR3) from Homo sapiens (Human).